We begin with the raw amino-acid sequence, 297 residues long: Large ribosomal subunit protein uL18 (297 aa).

A compositionally biased stretch (basic residues) spans 258-267 (KKAHPKKRWT). Residues 258–277 (KKAHPKKRWTEKKLTREQRQ) are disordered. Positions 268–277 (EKKLTREQRQ) are enriched in basic and acidic residues.

Belongs to the universal ribosomal protein uL18 family. In terms of assembly, component of the large ribosomal subunit (LSU).

Its subcellular location is the cytoplasm. The protein resides in the nucleus. Its function is as follows. Component of the ribosome, a large ribonucleoprotein complex responsible for the synthesis of proteins in the cell. The small ribosomal subunit (SSU) binds messenger RNAs (mRNAs) and translates the encoded message by selecting cognate aminoacyl-transfer RNA (tRNA) molecules. The large subunit (LSU) contains the ribosomal catalytic site termed the peptidyl transferase center (PTC), which catalyzes the formation of peptide bonds, thereby polymerizing the amino acids delivered by tRNAs into a polypeptide chain. The nascent polypeptides leave the ribosome through a tunnel in the LSU and interact with protein factors that function in enzymatic processing, targeting, and the membrane insertion of nascent chains at the exit of the ribosomal tunnel. The chain is Large ribosomal subunit protein uL18 (RPL5A) from Helianthus annuus (Common sunflower).